The following is a 545-amino-acid chain: Cryptochrome-1 (545 aa).

The 136-residue stretch at 3-138 (VNNILWFRHG…KCVEKVSHTL (136 aa)) folds into the Photolyase/cryptochrome alpha/beta domain. FAD is bound by residues Arg236, Ser264, Ser266, Gln307, His374, 406–408 (DAD), Cys412, and Asn415.

This sequence belongs to the DNA photolyase class-1 family. In terms of assembly, interacts with tim and per; promoted by light conditions. FAD is required as a cofactor.

It is found in the cytoplasm. The protein resides in the perinuclear region. The protein localises to the nucleus. Functionally, blue light-dependent regulator that is the input of the circadian feedback loop. Has no photolyase activity for cyclobutane pyrimidine dimers or 6-4 photoproducts. Regulation of expression by light suggests a role in photoreception for locomotor activity rhythms. Functions, together with per, as a transcriptional repressor required for the oscillation of peripheral circadian clocks and for the correct specification of clock cells. Genes directly activated by the transcription factors Clock (Clk) and cycle (cyc) are repressed by cry. The sequence is that of Cryptochrome-1 from Aedes aegypti (Yellowfever mosquito).